We begin with the raw amino-acid sequence, 530 residues long: Ubiquitin carboxyl-terminal hydrolase 17-like protein 18 (530 aa).

The USP domain maps to 80-375; sequence AGLQNMGNTC…QAYVLFYIQK (296 aa). Catalysis depends on C89, which acts as the Nucleophile. H334 (proton acceptor) is an active-site residue. Composition is skewed to basic and acidic residues over residues 382–392 and 398–413; these read SESVSRGREPR and DTDRRAKQGELKRDHP. 2 disordered regions span residues 382–414 and 509–530; these read SESVSRGREPRALGAEDTDRRAKQGELKRDHPC and RGRARRSKGKNKHSKRALLVCQ. Positions 510-524 are enriched in basic residues; that stretch reads GRARRSKGKNKHSKR.

Belongs to the peptidase C19 family. USP17 subfamily.

It localises to the nucleus. The protein resides in the endoplasmic reticulum. The catalysed reaction is Thiol-dependent hydrolysis of ester, thioester, amide, peptide and isopeptide bonds formed by the C-terminal Gly of ubiquitin (a 76-residue protein attached to proteins as an intracellular targeting signal).. Deubiquitinating enzyme that removes conjugated ubiquitin from specific proteins to regulate different cellular processes that may include cell proliferation, progression through the cell cycle, apoptosis, cell migration, and the cellular response to viral infection. This Homo sapiens (Human) protein is Ubiquitin carboxyl-terminal hydrolase 17-like protein 18 (USP17L18).